The chain runs to 193 residues: dCTP deaminase (193 aa).

Residues 110–115, D128, 136–138, Y171, K178, and Q182 contribute to the dCTP site; these read RSSLAR and VLE. E138 functions as the Proton donor/acceptor in the catalytic mechanism. Residues 169 to 193 are disordered; it reads RPYNRRQDAKYKDQQGAVASRIDKD.

This sequence belongs to the dCTP deaminase family. In terms of assembly, homotrimer.

It catalyses the reaction dCTP + H2O + H(+) = dUTP + NH4(+). Its pathway is pyrimidine metabolism; dUMP biosynthesis; dUMP from dCTP (dUTP route): step 1/2. Its function is as follows. Catalyzes the deamination of dCTP to dUTP. This chain is dCTP deaminase, found in Pectobacterium carotovorum subsp. carotovorum (strain PC1).